Reading from the N-terminus, the 662-residue chain is Bifunctional polymyxin resistance protein ArnA (662 aa).

The interval 1–307 (MTSKAVVFAY…ELGLVEGARL (307 aa)) is formyltransferase ArnAFT. His106 acts as the Proton donor; for formyltransferase activity in catalysis. (6R)-10-formyltetrahydrofolate contacts are provided by residues Arg116 and 138-142 (IERAD). The interval 316 to 662 (RRTRVLILGV…EALREREAQA (347 aa)) is dehydrogenase ArnADH. Residues Asp349 and 370 to 371 (DI) each bind NAD(+). Residues Ala395, Tyr400, and 434-435 (TS) contribute to the UDP-alpha-D-glucuronate site. Glu436 (proton acceptor; for decarboxylase activity) is an active-site residue. UDP-alpha-D-glucuronate is bound by residues Arg462, Asn493, 527–536 (RLVDGGAQKR), and Tyr614. Catalysis depends on Arg620, which acts as the Proton donor; for decarboxylase activity.

In the N-terminal section; belongs to the Fmt family. UDP-L-Ara4N formyltransferase subfamily. This sequence in the C-terminal section; belongs to the NAD(P)-dependent epimerase/dehydratase family. UDP-glucuronic acid decarboxylase subfamily. As to quaternary structure, homohexamer, formed by a dimer of trimers.

It catalyses the reaction UDP-alpha-D-glucuronate + NAD(+) = UDP-beta-L-threo-pentopyranos-4-ulose + CO2 + NADH. The catalysed reaction is UDP-4-amino-4-deoxy-beta-L-arabinose + (6R)-10-formyltetrahydrofolate = UDP-4-deoxy-4-formamido-beta-L-arabinose + (6S)-5,6,7,8-tetrahydrofolate + H(+). The protein operates within nucleotide-sugar biosynthesis; UDP-4-deoxy-4-formamido-beta-L-arabinose biosynthesis; UDP-4-deoxy-4-formamido-beta-L-arabinose from UDP-alpha-D-glucuronate: step 1/3. Its pathway is nucleotide-sugar biosynthesis; UDP-4-deoxy-4-formamido-beta-L-arabinose biosynthesis; UDP-4-deoxy-4-formamido-beta-L-arabinose from UDP-alpha-D-glucuronate: step 3/3. It functions in the pathway bacterial outer membrane biogenesis; lipopolysaccharide biosynthesis. In terms of biological role, bifunctional enzyme that catalyzes the oxidative decarboxylation of UDP-glucuronic acid (UDP-GlcUA) to UDP-4-keto-arabinose (UDP-Ara4O) and the addition of a formyl group to UDP-4-amino-4-deoxy-L-arabinose (UDP-L-Ara4N) to form UDP-L-4-formamido-arabinose (UDP-L-Ara4FN). The modified arabinose is attached to lipid A and is required for resistance to polymyxin and cationic antimicrobial peptides. This chain is Bifunctional polymyxin resistance protein ArnA, found in Pseudomonas aeruginosa (strain LESB58).